We begin with the raw amino-acid sequence, 565 residues long: Carboxylesterase 1D (565 aa).

A signal peptide spans 1-18 (MGLYPLIWLSLAACTAWG). The N-linked (GlcNAc...) asparagine glycan is linked to asparagine 79. A disulfide bond links cysteine 87 and cysteine 116. Catalysis depends on serine 221, which acts as the Acyl-ester intermediate. A disulfide bridge links cysteine 273 with cysteine 284. Glutamate 353 (charge relay system) is an active-site residue. An N6-succinyllysine modification is found at lysine 382. Histidine 466 serves as the catalytic Charge relay system. Residue asparagine 489 is glycosylated (N-linked (GlcNAc...) asparagine). Residues 562–565 (HVEL) carry the Prevents secretion from ER motif.

The protein belongs to the type-B carboxylesterase/lipase family. Homotrimer. As to expression, highest expression occurs in liver with lower levels in adipose tissue, kidney, heart, intestine, lung, testis and thymus.

Its subcellular location is the endoplasmic reticulum lumen. It is found in the cytoplasm. The protein resides in the cytosol. It localises to the lipid droplet. The protein localises to the microsome. The enzyme catalyses a carboxylic ester + H2O = an alcohol + a carboxylate + H(+). The catalysed reaction is a long-chain fatty acyl ethyl ester + H2O = a long-chain fatty acid + ethanol + H(+). It catalyses the reaction all-trans-retinyl hexadecanoate + H2O = all-trans-retinol + hexadecanoate + H(+). Major lipase in white adipose tissue. Involved in the metabolism of xenobiotics and of natural substrates. Hydrolyzes triacylglycerols and monoacylglycerols, with a preference for monoacylglycerols. The susceptibility of the substrate increases with decreasing acyl chain length of the fatty acid moiety. Catalyzes the synthesis of fatty acid ethyl esters. Hydrolyzes retinyl esters. The protein is Carboxylesterase 1D of Mus musculus (Mouse).